Consider the following 413-residue polypeptide: Probable glucan 1,3-beta-glucosidase ARB_04467 (413 aa).

The first 17 residues, 1–17 (MKFGSLLGLSLVGLSVA), serve as a signal peptide directing secretion. Positions 46, 202, and 262 each coordinate substrate. E202 serves as the catalytic Proton donor. A disulfide bridge links C282 with C412. The active-site Nucleophile is the E300.

It belongs to the glycosyl hydrolase 5 (cellulase A) family. In terms of assembly, monomer.

Its subcellular location is the secreted. It is found in the cell wall. It catalyses the reaction Successive hydrolysis of beta-D-glucose units from the non-reducing ends of (1-&gt;3)-beta-D-glucans, releasing alpha-glucose.. Functionally, major glucan 1,3-beta-glucosidase required for cell wall integrity. Beta-glucanases participate in the metabolism of beta-glucan, the main structural component of the cell wall. Can also function biosynthetically as a transglycosylase. Functions to deliver glucan from the cell to the extracellular matrix. Involved in cell-substrate and cell-cell adhesion. The chain is Probable glucan 1,3-beta-glucosidase ARB_04467 from Arthroderma benhamiae (strain ATCC MYA-4681 / CBS 112371) (Trichophyton mentagrophytes).